The following is a 121-amino-acid chain: Large ribosomal subunit protein bL12 (121 aa).

It belongs to the bacterial ribosomal protein bL12 family. Homodimer. Part of the ribosomal stalk of the 50S ribosomal subunit. Forms a multimeric L10(L12)X complex, where L10 forms an elongated spine to which 2 to 4 L12 dimers bind in a sequential fashion. Binds GTP-bound translation factors.

Functionally, forms part of the ribosomal stalk which helps the ribosome interact with GTP-bound translation factors. Is thus essential for accurate translation. The sequence is that of Large ribosomal subunit protein bL12 from Anoxybacillus flavithermus (strain DSM 21510 / WK1).